The sequence spans 295 residues: Chromatin modification-related protein YNG2 (295 aa).

A disordered region spans residues 151-208 (NGTAGSGSSSGRKRPASSSSANGKGQKRKQQKKERSRSHQRAGTVSRDVSPNAGIGRD). The segment covering 156-171 (SGSSSGRKRPASSSSA) has biased composition (low complexity). The segment covering 175 to 190 (GQKRKQQKKERSRSHQ) has biased composition (basic residues). The PHD-type zinc finger occupies 233–282 (QLYCFCQRVSYGEMVACDGPNCKYEWFHYSCVNLTEPPKGQWYCPECRLE). Residues Cys-236, Cys-238, Cys-249, Cys-254, His-260, Cys-263, Cys-276, and Cys-279 each contribute to the Zn(2+) site.

Belongs to the ING family. As to quaternary structure, interacts with H3K4me3 and to a lesser extent with H3K4me2. Component of the NuA4 histone acetyltransferase complex.

Its subcellular location is the nucleus. Functionally, component of the NuA4 histone acetyltransferase complex which is involved in transcriptional activation of selected genes principally by acetylation of nucleosomal histone H4 and H2A. The NuA4 complex is also involved in DNA repair. Involved in cell cycle progression and meiosis. This is Chromatin modification-related protein YNG2 (YNG2) from Kluyveromyces lactis (strain ATCC 8585 / CBS 2359 / DSM 70799 / NBRC 1267 / NRRL Y-1140 / WM37) (Yeast).